The chain runs to 246 residues: MIKSFFAALSFISRLPVPARLSQGLEIEQYQRSIVTFPLVGLLLGAIAGAVALLLQPWCGVPLAALFGVLALALLTGGFHLDGLADTCDGIFSARTRDRMLEIMRDSRLGTHGGLALIFVLVAKVLVVGELLLRDIHPIAALAAACAVGRGMAALLMYRHRYAREKGLGNLFIGKISLQQTLVTMAMAIALATALLGLQGLRAALITLVLIWGLGWALKRTLGGQTGDTLGAAIELGELLFLLALL.

6 consecutive transmembrane segments (helical) span residues 34 to 54 (IVTF…VALL), 59 to 79 (CGVP…TGGF), 113 to 133 (GGLA…ELLL), 136 to 156 (IHPI…AALL), 181 to 201 (TLVT…LQGL), and 203 to 223 (AALI…RTLG).

This sequence belongs to the CobS family. Requires Mg(2+) as cofactor.

Its subcellular location is the cell inner membrane. It catalyses the reaction alpha-ribazole + adenosylcob(III)inamide-GDP = adenosylcob(III)alamin + GMP + H(+). The enzyme catalyses alpha-ribazole 5'-phosphate + adenosylcob(III)inamide-GDP = adenosylcob(III)alamin 5'-phosphate + GMP + H(+). It participates in cofactor biosynthesis; adenosylcobalamin biosynthesis; adenosylcobalamin from cob(II)yrinate a,c-diamide: step 7/7. Functionally, joins adenosylcobinamide-GDP and alpha-ribazole to generate adenosylcobalamin (Ado-cobalamin). Also synthesizes adenosylcobalamin 5'-phosphate from adenosylcobinamide-GDP and alpha-ribazole 5'-phosphate. This is Adenosylcobinamide-GDP ribazoletransferase from Klebsiella pneumoniae subsp. pneumoniae (strain ATCC 700721 / MGH 78578).